A 130-amino-acid chain; its full sequence is Small ribosomal subunit protein uS9 (130 aa).

The protein belongs to the universal ribosomal protein uS9 family.

The chain is Small ribosomal subunit protein uS9 from Caldicellulosiruptor saccharolyticus (strain ATCC 43494 / DSM 8903 / Tp8T 6331).